A 60-amino-acid chain; its full sequence is Cytotoxin 1 (60 aa).

4 cysteine pairs are disulfide-bonded: Cys3/Cys21, Cys14/Cys38, Cys42/Cys53, and Cys54/Cys59.

It belongs to the three-finger toxin family. Short-chain subfamily. Type IA cytotoxin sub-subfamily. Monomer in solution; Homodimer and oligomer in the presence of negatively charged lipids forming a pore with a size ranging between 20 and 30 Angstroms. Expressed by the venom gland.

The protein resides in the secreted. The protein localises to the target cell membrane. In terms of biological role, shows cytolytic activity on many different cells by forming pore in lipid membranes. In vivo, increases heart rate or kills the animal by cardiac arrest. In addition, it binds to heparin with high affinity, interacts with Kv channel-interacting protein 1 (KCNIP1) in a calcium-independent manner, and binds to integrin alpha-V/beta-3 (ITGAV/ITGB3) with moderate affinity. This Naja mossambica (Mozambique spitting cobra) protein is Cytotoxin 1.